The primary structure comprises 40 residues: Large ribosomal subunit protein bL36 (40 aa).

This sequence belongs to the bacterial ribosomal protein bL36 family.

This chain is Large ribosomal subunit protein bL36, found in Corynebacterium glutamicum (strain R).